We begin with the raw amino-acid sequence, 401 residues long: NAD(P)H-quinone oxidoreductase subunit H, chloroplastic (401 aa).

This sequence belongs to the complex I 49 kDa subunit family. In terms of assembly, NDH is composed of at least 16 different subunits, 5 of which are encoded in the nucleus.

Its subcellular location is the plastid. It is found in the chloroplast thylakoid membrane. It carries out the reaction a plastoquinone + NADH + (n+1) H(+)(in) = a plastoquinol + NAD(+) + n H(+)(out). The catalysed reaction is a plastoquinone + NADPH + (n+1) H(+)(in) = a plastoquinol + NADP(+) + n H(+)(out). Its function is as follows. NDH shuttles electrons from NAD(P)H:plastoquinone, via FMN and iron-sulfur (Fe-S) centers, to quinones in the photosynthetic chain and possibly in a chloroplast respiratory chain. The immediate electron acceptor for the enzyme in this species is believed to be plastoquinone. Couples the redox reaction to proton translocation, and thus conserves the redox energy in a proton gradient. This Aethionema cordifolium (Lebanon stonecress) protein is NAD(P)H-quinone oxidoreductase subunit H, chloroplastic.